The sequence spans 186 residues: Ribosome-recycling factor (186 aa).

This sequence belongs to the RRF family.

The protein localises to the cytoplasm. Functionally, responsible for the release of ribosomes from messenger RNA at the termination of protein biosynthesis. May increase the efficiency of translation by recycling ribosomes from one round of translation to another. This Chlorobium phaeobacteroides (strain BS1) protein is Ribosome-recycling factor.